The primary structure comprises 262 residues: Indole-3-glycerol phosphate synthase (262 aa).

The protein belongs to the TrpC family.

The enzyme catalyses 1-(2-carboxyphenylamino)-1-deoxy-D-ribulose 5-phosphate + H(+) = (1S,2R)-1-C-(indol-3-yl)glycerol 3-phosphate + CO2 + H2O. The protein operates within amino-acid biosynthesis; L-tryptophan biosynthesis; L-tryptophan from chorismate: step 4/5. The polypeptide is Indole-3-glycerol phosphate synthase (Bordetella pertussis (strain Tohama I / ATCC BAA-589 / NCTC 13251)).